A 151-amino-acid chain; its full sequence is Large ribosomal subunit protein uL15 (151 aa).

Residues 1–57 form a disordered region; it reads MTLRLDSLKANKGARRRKLRKGRGIAAGQGASCGFGMRGQKSRSGRPTRPGFEGGQM. Basic residues predominate over residues 12–23; it reads KGARRRKLRKGR. Gly residues predominate over residues 25 to 37; sequence IAAGQGASCGFGM.

This sequence belongs to the universal ribosomal protein uL15 family. As to quaternary structure, part of the 50S ribosomal subunit.

Its function is as follows. Binds to the 23S rRNA. This chain is Large ribosomal subunit protein uL15, found in Synechococcus sp. (strain CC9902).